The sequence spans 170 residues: Ribulose bisphosphate carboxylase small subunit, chloroplastic (170 aa).

2 transit peptides (chloroplast) span residues 1–46 (MAPT…GRIR) and 1–47 (MAPT…RIRC).

Belongs to the RuBisCO small chain family. As to quaternary structure, heterohexadecamer of 8 large and 8 small subunits.

Its subcellular location is the plastid. It is found in the chloroplast. RuBisCO catalyzes two reactions: the carboxylation of D-ribulose 1,5-bisphosphate, the primary event in carbon dioxide fixation, as well as the oxidative fragmentation of the pentose substrate. Both reactions occur simultaneously and in competition at the same active site. Although the small subunit is not catalytic it is essential for maximal activity. The polypeptide is Ribulose bisphosphate carboxylase small subunit, chloroplastic (Zea mays (Maize)).